Consider the following 463-residue polypeptide: Stress-activated protein kinase jnk-1 (463 aa).

A compositionally biased stretch (polar residues) spans 1 to 12; that stretch reads MEERLSTTSSYP. The disordered stretch occupies residues 1-23; it reads MEERLSTTSSYPSHPGRSVEEDH. The region spanning 119–412 is the Protein kinase domain; sequence YQNLRLIGSG…ISVDDALRHP (294 aa). ATP-binding positions include 126–131 and Lys-148; that span reads GSGAQG. The Proton acceptor role is filled by Asp-244. Thr-276 carries the phosphothreonine modification. Residues 276–278 carry the TXY motif; the sequence is TPY. Phosphotyrosine is present on Tyr-278.

Belongs to the protein kinase superfamily. CMGC Ser/Thr protein kinase family. MAP kinase subfamily. Binds to the scaffolding protein, unc-16. Unc-16 also binds other components of the JNK signaling pathway. Interacts with daf-16. Mg(2+) serves as cofactor. Post-translationally, dually phosphorylated on Thr-276 and Tyr-278, which activates the enzyme. Expressed in most neurons, including nerve ring, head ganglions, dorsal and ventral nerve cords and tail ganglions. The Thr-276/Tyr-278 phosphorylated form is present in the nerve ring upon heat exposure.

It localises to the cytoplasm. It is found in the perikaryon. Its subcellular location is the cell projection. The protein resides in the axon. It catalyses the reaction L-seryl-[protein] + ATP = O-phospho-L-seryl-[protein] + ADP + H(+). The enzyme catalyses L-threonyl-[protein] + ATP = O-phospho-L-threonyl-[protein] + ADP + H(+). With respect to regulation, activated by threonine and tyrosine phosphorylation by either of the dual specificity kinases, jkk-1 and mek-1. Serine/threonine-protein kinase which responds to activation by environmental stress by phosphorylating a number of transcription factors such as daf-16, and thus regulates transcriptional activity. By phosphorylating daf-16, plays a role in daf-16 nuclear translocation in intestinal cells in response to environmental stresses such as heat and oxidative stresses. Downstream of jkk-1, may coordinate locomotion via type-D GABAergic motoneurons and regulates synaptic vesicle transport in conjunction with unc-16. Independently of jkk-1, may regulate some mechanosensory responses, such as response to touch. Independently of jkk-1 and downstream of mek-1, plays a role in resistance to heavy metals, such as Cu(2+) or Cd(2+). Regulates germline cell apoptosis in response to heavy metals such as Cu(2+) and arsenite. Required for dopaminergic CEP neuron degeneration in response to Mn(2+). Required for normal sleep bout quantity and arousal thresholds during the transition from the last larval stage to adulthood in well-fed animals. Downstream of jkk-1 but independently of mek-1, positively regulates lifespan. The polypeptide is Stress-activated protein kinase jnk-1 (jnk-1) (Caenorhabditis elegans).